A 416-amino-acid chain; its full sequence is Alpha-1-antiproteinase (416 aa).

The signal sequence occupies residues 1–24; sequence MALSITRGLLLLAALCCLAPISLA. Asn68, Asn105, Asn143, and Asn269 each carry an N-linked (GlcNAc...) asparagine glycan. Residues 371–390 form an RCL region; that stretch reads GSTFLEAIPMSLPPDVEFNR. A Phosphoserine modification is found at Ser381.

Belongs to the serpin family. In terms of assembly, interacts with CELA2A. Interacts with ERGIC3 and LMAN1/ERGIC53. Interacts with PRSS1/Trypsin. As to expression, plasma.

The protein resides in the secreted. Inhibitor of serine proteases. Its primary target is elastase, but it also has a moderate affinity for plasmin and thrombin. Inhibits trypsin, chymotrypsin and plasminogen activator. This is Alpha-1-antiproteinase (SERPINA1) from Bos taurus (Bovine).